The primary structure comprises 81 residues: Protein GPR15LG (81 aa).

An N-terminal signal peptide occupies residues 1–24 (MRFLALTSLLCILLLCLSFFSAEG). Cystine bridges form between Cys40-Cys63 and Cys41-Cys60.

Interacts with SUSD2; the interaction is direct.

It is found in the secreted. Functionally, highly cationic protein that has multiple functions. Acts as a chemotactic factor that mediates lymphocytes recruitment to epithelia through binding and activation of the G-protein coupled receptor GPR15. May be a tumor suppressor; together with SUSD2 has a growth inhibitory effect on colon cancer cells which includes G1 cell cycle arrest. May regulate keratinocyte proliferation. In addition, through activation of Mas-related G protein-coupled receptors (MRGPRs) contributes to pruritogenesis by activating itch-selective sensory neurons and mast cells degranulation. In terms of biological role, has antimicrobial activity against Gram-positive bacteria, including Staphylococcus aureus and Actinomyces spec., and Mycoplasma hominis and lentivirus. In Sus scrofa (Pig), this protein is Protein GPR15LG (GPR15LG).